Here is a 225-residue protein sequence, read N- to C-terminus: Ribonuclease HII (225 aa).

An RNase H type-2 domain is found at 2 to 210; it reads GIVVGVDEAG…VRKLGGPWRS (209 aa). 3 residues coordinate a divalent metal cation: Asp8, Glu9, and Asp107.

This sequence belongs to the RNase HII family. The cofactor is Mn(2+). Mg(2+) is required as a cofactor.

It is found in the cytoplasm. The catalysed reaction is Endonucleolytic cleavage to 5'-phosphomonoester.. Its function is as follows. Endonuclease that specifically degrades the RNA of RNA-DNA hybrids. The polypeptide is Ribonuclease HII (rnhB) (Aeropyrum pernix (strain ATCC 700893 / DSM 11879 / JCM 9820 / NBRC 100138 / K1)).